We begin with the raw amino-acid sequence, 146 residues long: Ataxin-7-like protein 1 (146 aa).

Disordered stretches follow at residues 1-27 (MTSE…QEGT) and 125-146 (KRNA…QRQV). Residues 127–138 (NASISWSGAESR) are compositionally biased toward polar residues.

This chain is Ataxin-7-like protein 1 (Atxn7l1), found in Mus musculus (Mouse).